We begin with the raw amino-acid sequence, 869 residues long: Bifunctional uridylyltransferase/uridylyl-removing enzyme (869 aa).

The tract at residues 1–332 (MTDTPAERPD…QFDGEATPEP (332 aa)) is uridylyltransferase. Residues 333 to 691 (LGGGFSLRRG…RRAVPDNDAL (359 aa)) form a uridylyl-removing region. In terms of domain architecture, HD spans 450 to 572 (VDQHTLMVLR…VGTRERLDYL (123 aa)). ACT domains follow at residues 692-774 (EVFV…RAVP) and 798-869 (RISL…LDPV).

It belongs to the GlnD family. Mg(2+) is required as a cofactor.

The catalysed reaction is [protein-PII]-L-tyrosine + UTP = [protein-PII]-uridylyl-L-tyrosine + diphosphate. It carries out the reaction [protein-PII]-uridylyl-L-tyrosine + H2O = [protein-PII]-L-tyrosine + UMP + H(+). Uridylyltransferase (UTase) activity is inhibited by glutamine, while glutamine activates uridylyl-removing (UR) activity. Its function is as follows. Modifies, by uridylylation and deuridylylation, the PII regulatory proteins (GlnB and homologs), in response to the nitrogen status of the cell that GlnD senses through the glutamine level. Under low glutamine levels, catalyzes the conversion of the PII proteins and UTP to PII-UMP and PPi, while under higher glutamine levels, GlnD hydrolyzes PII-UMP to PII and UMP (deuridylylation). Thus, controls uridylylation state and activity of the PII proteins, and plays an important role in the regulation of nitrogen assimilation and metabolism. This chain is Bifunctional uridylyltransferase/uridylyl-removing enzyme, found in Xanthomonas euvesicatoria pv. vesicatoria (strain 85-10) (Xanthomonas campestris pv. vesicatoria).